We begin with the raw amino-acid sequence, 559 residues long: Cytokine-like nuclear factor N-PAC (559 aa).

Positions 9-70 (VNDLVWAKMK…ETQIKPYQEF (62 aa)) constitute a PWWP domain. The disordered stretch occupies residues 106–137 (SEQDNRPDPDVEFNKLREGGTESGEETTVNNT). Basic and acidic residues predominate over residues 108–125 (QDNRPDPDVEFNKLREGG). A dehydrogenase domain region spans residues 267–559 (RNIQASNLKF…SSAVYVRARF (293 aa)). NAD(+) contacts are provided by residues 277-291 (GFLGLGIMGCGMVKN) and K511.

This sequence belongs to the HIBADH-related family. NP60 subfamily. Binds to mononucleosomes.

Its subcellular location is the chromosome. In terms of biological role, nucleosome-destabilizing factor that is recruited to genes during transcriptional activation and colocalizes with a subset of trimethylated 'Lys-36' histone H3 (H3K36me3)-enriched regions. The sequence is that of Cytokine-like nuclear factor N-PAC from Aedes aegypti (Yellowfever mosquito).